The sequence spans 418 residues: Serine hydroxymethyltransferase (418 aa).

(6S)-5,6,7,8-tetrahydrofolate is bound by residues L121 and 125-127 (GHL). N6-(pyridoxal phosphate)lysine is present on K230. 355–357 (SPF) lines the (6S)-5,6,7,8-tetrahydrofolate pocket.

It belongs to the SHMT family. In terms of assembly, homodimer. Pyridoxal 5'-phosphate serves as cofactor.

The protein resides in the cytoplasm. The enzyme catalyses (6R)-5,10-methylene-5,6,7,8-tetrahydrofolate + glycine + H2O = (6S)-5,6,7,8-tetrahydrofolate + L-serine. It functions in the pathway one-carbon metabolism; tetrahydrofolate interconversion. The protein operates within amino-acid biosynthesis; glycine biosynthesis; glycine from L-serine: step 1/1. Its function is as follows. Catalyzes the reversible interconversion of serine and glycine with tetrahydrofolate (THF) serving as the one-carbon carrier. This reaction serves as the major source of one-carbon groups required for the biosynthesis of purines, thymidylate, methionine, and other important biomolecules. Also exhibits THF-independent aldolase activity toward beta-hydroxyamino acids, producing glycine and aldehydes, via a retro-aldol mechanism. This is Serine hydroxymethyltransferase from Streptococcus pyogenes serotype M49 (strain NZ131).